The following is a 196-amino-acid chain: Putative NADH dehydrogenase/NAD(P)H nitroreductase PST_3601 (196 aa).

The protein belongs to the nitroreductase family. HadB/RutE subfamily. FMN serves as cofactor.

This chain is Putative NADH dehydrogenase/NAD(P)H nitroreductase PST_3601, found in Stutzerimonas stutzeri (strain A1501) (Pseudomonas stutzeri).